Reading from the N-terminus, the 169-residue chain is Protein kinase-interacting protein PIKP1 (169 aa).

As to quaternary structure, interacts with protein kinase PK1.

Its function is as follows. Plays a role in the stimulation of the viral kinase PK1 function in very late transcription and in expression of genes required for budded virus production. The chain is Protein kinase-interacting protein PIKP1 (AC24) from Lepidoptera (butterflies and moths).